A 261-amino-acid polypeptide reads, in one-letter code: Imidazole glycerol phosphate synthase subunit HisF (261 aa).

Active-site residues include aspartate 12 and aspartate 131.

Belongs to the HisA/HisF family. Heterodimer of HisH and HisF.

It localises to the cytoplasm. The catalysed reaction is 5-[(5-phospho-1-deoxy-D-ribulos-1-ylimino)methylamino]-1-(5-phospho-beta-D-ribosyl)imidazole-4-carboxamide + L-glutamine = D-erythro-1-(imidazol-4-yl)glycerol 3-phosphate + 5-amino-1-(5-phospho-beta-D-ribosyl)imidazole-4-carboxamide + L-glutamate + H(+). It functions in the pathway amino-acid biosynthesis; L-histidine biosynthesis; L-histidine from 5-phospho-alpha-D-ribose 1-diphosphate: step 5/9. IGPS catalyzes the conversion of PRFAR and glutamine to IGP, AICAR and glutamate. The HisF subunit catalyzes the cyclization activity that produces IGP and AICAR from PRFAR using the ammonia provided by the HisH subunit. This chain is Imidazole glycerol phosphate synthase subunit HisF, found in Brucella melitensis biotype 2 (strain ATCC 23457).